We begin with the raw amino-acid sequence, 252 residues long: Curing of [URE3] protein 1 (252 aa).

The protein localises to the nucleus. Its function is as follows. Involved in the curing of prion [URE3]. Nuclear localization of this protein may suggest a role in transcription regulation, so it might exert an effect on [URE3] through known prion-curing chaperones or BTN2. The sequence is that of Curing of [URE3] protein 1 (CUR1) from Saccharomyces cerevisiae (strain ATCC 204508 / S288c) (Baker's yeast).